A 315-amino-acid chain; its full sequence is Homocysteine S-methyltransferase YbgG (315 aa).

The region spanning 2–309 is the Hcy-binding domain; that stretch reads NPIQHILDTY…ENIQEIAAWA (308 aa). The Zn(2+) site is built by C229, C294, and C295.

The cofactor is Zn(2+).

It catalyses the reaction S-methyl-L-methionine + L-homocysteine = 2 L-methionine + H(+). The chain is Homocysteine S-methyltransferase YbgG (ybgG) from Bacillus subtilis (strain 168).